A 334-amino-acid polypeptide reads, in one-letter code: Ornithine carbamoyltransferase (334 aa).

Residues 56–59, Gln-83, Arg-107, and 134–137 contribute to the carbamoyl phosphate site; these read STRT and HPTQ. Residues Asn-168, Asp-232, and 236-237 each bind L-ornithine; that span reads SM. Carbamoyl phosphate-binding positions include 274 to 275 and Arg-320; that span reads CL.

The protein belongs to the aspartate/ornithine carbamoyltransferase superfamily. OTCase family.

The protein resides in the cytoplasm. The enzyme catalyses carbamoyl phosphate + L-ornithine = L-citrulline + phosphate + H(+). It functions in the pathway amino-acid biosynthesis; L-arginine biosynthesis; L-arginine from L-ornithine and carbamoyl phosphate: step 1/3. Its function is as follows. Reversibly catalyzes the transfer of the carbamoyl group from carbamoyl phosphate (CP) to the N(epsilon) atom of ornithine (ORN) to produce L-citrulline. The chain is Ornithine carbamoyltransferase from Escherichia coli O45:K1 (strain S88 / ExPEC).